The primary structure comprises 246 residues: uncharacterized protein (246 aa).

Disordered regions lie at residues 29-54 (SLET…ENGS), 93-114 (LRRT…EDKF), and 148-246 (PIPP…SVVI). The segment covering 35–49 (PTSSSPSLSSNSDVS) has biased composition (low complexity). Residues 172–183 (RQQTNNIRTLHV) show a composition bias toward polar residues. Low complexity-rich tracts occupy residues 190–203 (SSSS…PSSS) and 214–225 (SKTTKNRSSNSS). Asn-219 carries an N-linked (GlcNAc...) asparagine glycan. The span at 235–246 (LTPSPTFESVVI) shows a compositional bias: polar residues.

This is an uncharacterized protein from Caenorhabditis elegans.